We begin with the raw amino-acid sequence, 298 residues long: ATP phosphoribosyltransferase (298 aa).

This sequence belongs to the ATP phosphoribosyltransferase family.

The protein localises to the cytoplasm. It carries out the reaction 1-(5-phospho-beta-D-ribosyl)-ATP + diphosphate = 5-phospho-alpha-D-ribose 1-diphosphate + ATP. The protein operates within amino-acid biosynthesis; L-histidine biosynthesis; L-histidine from 5-phospho-alpha-D-ribose 1-diphosphate: step 1/9. Its function is as follows. Catalyzes the condensation of ATP and 5-phosphoribose 1-diphosphate to form N'-(5'-phosphoribosyl)-ATP (PR-ATP). Has a crucial role in the pathway because the rate of histidine biosynthesis seems to be controlled primarily by regulation of the enzymatic activity. This chain is ATP phosphoribosyltransferase (HIS1), found in Candida albicans (strain SC5314 / ATCC MYA-2876) (Yeast).